Here is a 463-residue protein sequence, read N- to C-terminus: Nuclear hormone receptor family member nhr-3 (463 aa).

Positions 50–125 (STICSVCCDE…VGMEPDAIRP (76 aa)) form a DNA-binding region, nuclear receptor. 2 consecutive NR C4-type zinc fingers follow at residues 53 to 73 (CSVC…CFGC) and 89 to 113 (CRYS…FQKC). Residues 121–131 (DAIRPDRDKTG) show a composition bias toward basic and acidic residues. The disordered stretch occupies residues 121-143 (DAIRPDRDKTGRQKNPRRNTEGS). Positions 199–462 (EIENIVIQLQ…VLEELLFLDR (264 aa)) constitute an NR LBD domain.

This sequence belongs to the nuclear hormone receptor family.

The protein localises to the nucleus. Its function is as follows. Orphan nuclear receptor. In Caenorhabditis elegans, this protein is Nuclear hormone receptor family member nhr-3 (nhr-3).